Reading from the N-terminus, the 332-residue chain is Glycerol-3-phosphate dehydrogenase [NAD(P)+] (332 aa).

Positions 11, 30, and 108 each coordinate NADPH. Residues lysine 108, glycine 137, and serine 139 each contribute to the sn-glycerol 3-phosphate site. Alanine 141 contributes to the NADPH binding site. 5 residues coordinate sn-glycerol 3-phosphate: lysine 192, aspartate 245, serine 255, arginine 256, and asparagine 257. Catalysis depends on lysine 192, which acts as the Proton acceptor. Arginine 256 provides a ligand contact to NADPH. Residues valine 280 and glutamate 282 each coordinate NADPH.

The protein belongs to the NAD-dependent glycerol-3-phosphate dehydrogenase family.

The protein resides in the cytoplasm. It carries out the reaction sn-glycerol 3-phosphate + NAD(+) = dihydroxyacetone phosphate + NADH + H(+). It catalyses the reaction sn-glycerol 3-phosphate + NADP(+) = dihydroxyacetone phosphate + NADPH + H(+). It participates in membrane lipid metabolism; glycerophospholipid metabolism. In terms of biological role, catalyzes the reduction of the glycolytic intermediate dihydroxyacetone phosphate (DHAP) to sn-glycerol 3-phosphate (G3P), the key precursor for phospholipid synthesis. This chain is Glycerol-3-phosphate dehydrogenase [NAD(P)+], found in Burkholderia orbicola (strain AU 1054).